The primary structure comprises 286 residues: MAFPKRLEYGGHALVWSGDWSAAGARKAIAGAARAGYDYIEIALLDPWQIDVALTKDLLQEYNLRAHASLGLSAATDVTSTDPAIVAKGDELLRKATDVLYALGGSELCGVIYCALGKYPGPASRENRANSVAAMQRLADYAADKGINIDLEVVNRYETNIMNTGLEGLAFLDEVNRPNAFLHLDTYHMNIEENGMAKSVLAAGDRLGYVHIGESHRGYLGTGNVDFASFFAALKQIDYRGPITFESFSSEIVDPKLSNTLCVWRNLWHDSDDLAGKALEFIKQRY.

His12, Ser69, Glu152, and Glu158 together coordinate D-allulose. Residues His12, Ser69, Glu152, and Glu158 each coordinate D-fructose. Residue Glu152 is the Proton donor/acceptor of the active site. Glu152 is a Mn(2+) binding site. Asp185 provides a ligand contact to Mn(2+). D-allulose contacts are provided by His188, His211, Arg217, and Glu246. D-fructose contacts are provided by His188, His211, Arg217, and Glu246. Position 211 (His211) interacts with Mn(2+). Glu246 (proton donor/acceptor) is an active-site residue. Glu246 is a Mn(2+) binding site.

It belongs to the hyi family. In terms of assembly, homodimer. It depends on Mn(2+) as a cofactor.

The catalysed reaction is L-ribulose = L-xylulose. It carries out the reaction D-ribulose = D-xylulose. It catalyses the reaction D-allulose = keto-D-fructose. The enzyme catalyses keto-L-tagatose = keto-L-sorbose. The catalysed reaction is keto-D-tagatose = keto-D-sorbose. Catalyzes the epimerization of various ketoses at the C(3) position. Exhibits the highest enzymatic activity toward L-ribulose, followed by D-ribulose, D-allulose and D-fructose. Shows lower activity with L-xylulose, L-tagatose, D-xylulose, D-tagatose, L-sorbose, D-sorbose, and weak activity with L-allulose and L-fructose. This chain is L-ribulose 3-epimerase, found in Methylomonas sp. (strain DH-1).